The chain runs to 409 residues: N-acetylglucosamine-6-phosphate deacetylase (409 aa).

Residue E143 coordinates a divalent metal cation. 154-155 (AH) contributes to the substrate binding site. The a divalent metal cation site is built by H211 and H232. Substrate is bound by residues 235–236 (NA), R243, and 269–272 (DGIH). Catalysis depends on D294, which acts as the Proton donor/acceptor. 328-330 (LSG) contributes to the substrate binding site.

The protein belongs to the metallo-dependent hydrolases superfamily. NagA family. A divalent metal cation is required as a cofactor.

It catalyses the reaction N-acetyl-D-glucosamine 6-phosphate + H2O = D-glucosamine 6-phosphate + acetate. It functions in the pathway amino-sugar metabolism; N-acetylneuraminate degradation. Functionally, hydrolyzes the N-glycolyl group from N-glycolylglucosamine 6-phosphate (GlcNGc-6-P) in the N-glycolylneuraminic acid (Neu5Gc) degradation pathway. The protein is N-acetylglucosamine-6-phosphate deacetylase (AMDHD2) of Bos taurus (Bovine).